The chain runs to 37 residues: Large ribosomal subunit protein bL36 (37 aa).

Belongs to the bacterial ribosomal protein bL36 family.

In Mycoplasma sp, this protein is Large ribosomal subunit protein bL36 (rpmJ).